Reading from the N-terminus, the 122-residue chain is LOB domain-containing protein 5 (122 aa).

The LOB domain maps to 8 to 109 (RPCSVCITKN…AYLRELQEKI (102 aa)).

This sequence belongs to the LOB domain-containing protein family.

In Arabidopsis thaliana (Mouse-ear cress), this protein is LOB domain-containing protein 5 (LBD5).